The sequence spans 396 residues: Stearoyl-[acyl-carrier-protein] 9-desaturase, chloroplastic (396 aa).

Residues 1–33 (MALRITPVTLQSERYRSFSFPKKANLRSPKFAM) constitute a chloroplast transit peptide. At Ala-34 the chain carries Blocked amino end (Ala); partial. The Fe cation site is built by Glu-138, Glu-176, His-179, Glu-229, Glu-262, and His-265.

The protein belongs to the fatty acid desaturase type 2 family. As to quaternary structure, homodimer. Requires Fe(2+) as cofactor. In terms of processing, most of the N-terminus is blocked.

The protein resides in the plastid. It is found in the chloroplast. It catalyses the reaction octadecanoyl-[ACP] + 2 reduced [2Fe-2S]-[ferredoxin] + O2 + 2 H(+) = (9Z)-octadecenoyl-[ACP] + 2 oxidized [2Fe-2S]-[ferredoxin] + 2 H2O. It participates in lipid metabolism; fatty acid metabolism. In terms of biological role, converts stearoyl-ACP to oleoyl-ACP by introduction of a cis double bond between carbons 9 and 10 of the acyl chain. This is Stearoyl-[acyl-carrier-protein] 9-desaturase, chloroplastic from Carthamus tinctorius (Safflower).